A 484-amino-acid polypeptide reads, in one-letter code: Adenylosuccinate lyase (484 aa).

Ala2 is modified (N-acetylalanine). Residues 20–21, 85–87, and 111–112 each bind substrate; these read RY, RHD, and TS. Lys147 bears the N6-acetyllysine mark. His159 serves as the catalytic Proton donor/acceptor. Residue Gln241 coordinates substrate. Ser289 functions as the Proton donor/acceptor in the catalytic mechanism. Residue Lys295 is modified to N6-acetyllysine. Residues Arg303, Arg329, Ser334, and Arg338 each contribute to the substrate site. Lys415 participates in a covalent cross-link: Glycyl lysine isopeptide (Lys-Gly) (interchain with G-Cter in SUMO1).

Belongs to the lyase 1 family. Adenylosuccinate lyase subfamily. As to quaternary structure, homotetramer. Residues from neighboring subunits contribute catalytic and substrate-binding residues to each active site. As to expression, ubiquitously expressed. Both isoforms are produced by all tissues. Isoform 2 is 10-fold less abundant than isoform 1.

The catalysed reaction is N(6)-(1,2-dicarboxyethyl)-AMP = fumarate + AMP. The enzyme catalyses (2S)-2-[5-amino-1-(5-phospho-beta-D-ribosyl)imidazole-4-carboxamido]succinate = 5-amino-1-(5-phospho-beta-D-ribosyl)imidazole-4-carboxamide + fumarate. The protein operates within purine metabolism; AMP biosynthesis via de novo pathway; AMP from IMP: step 2/2. It functions in the pathway purine metabolism; IMP biosynthesis via de novo pathway; 5-amino-1-(5-phospho-D-ribosyl)imidazole-4-carboxamide from 5-amino-1-(5-phospho-D-ribosyl)imidazole-4-carboxylate: step 2/2. With respect to regulation, the enzyme reaction kinetics indicate cooperativity between subunits. Catalyzes two non-sequential steps in de novo AMP synthesis: converts (S)-2-(5-amino-1-(5-phospho-D-ribosyl)imidazole-4-carboxamido)succinate (SAICAR) to fumarate plus 5-amino-1-(5-phospho-D-ribosyl)imidazole-4-carboxamide, and thereby also contributes to de novo IMP synthesis, and converts succinyladenosine monophosphate (SAMP) to AMP and fumarate. This is Adenylosuccinate lyase (ADSL) from Homo sapiens (Human).